The sequence spans 215 residues: UPF0502 protein Shew_1617 (215 aa).

It belongs to the UPF0502 family.

In Shewanella loihica (strain ATCC BAA-1088 / PV-4), this protein is UPF0502 protein Shew_1617.